We begin with the raw amino-acid sequence, 496 residues long: uncharacterized protein (496 aa).

Mg(2+) contacts are provided by Asp36, Asp81, Glu300, Glu302, Asp321, Asp323, and Asp375.

This sequence belongs to the XPG/RAD2 endonuclease family. FEN1 subfamily. Mg(2+) serves as cofactor.

This is an uncharacterized protein from Schizosaccharomyces pombe (strain 972 / ATCC 24843) (Fission yeast).